A 133-amino-acid polypeptide reads, in one-letter code: ATP synthase epsilon chain (133 aa).

The segment at 81–110 (AAERPEQIDTERARKAKERAEQRLASEHVD) is disordered.

It belongs to the ATPase epsilon chain family. F-type ATPases have 2 components, CF(1) - the catalytic core - and CF(0) - the membrane proton channel. CF(1) has five subunits: alpha(3), beta(3), gamma(1), delta(1), epsilon(1). CF(0) has three main subunits: a, b and c.

It is found in the cell membrane. Functionally, produces ATP from ADP in the presence of a proton gradient across the membrane. This is ATP synthase epsilon chain from Shouchella clausii (strain KSM-K16) (Alkalihalobacillus clausii).